Here is a 78-residue protein sequence, read N- to C-terminus: Sec-independent protein translocase protein TatA (78 aa).

The helical transmembrane segment at 1-21 (MFGRIGLPEILLILAIALIIF) threads the bilayer. The tract at residues 50-78 (EVNEVEEEVKENKSSDVKENEDNKTEKST) is disordered. Over residues 59 to 78 (KENKSSDVKENEDNKTEKST) the composition is skewed to basic and acidic residues.

The protein belongs to the TatA/E family. Forms a complex with TatC.

It localises to the cell membrane. Functionally, part of the twin-arginine translocation (Tat) system that transports large folded proteins containing a characteristic twin-arginine motif in their signal peptide across membranes. TatA could form the protein-conducting channel of the Tat system. This Natranaerobius thermophilus (strain ATCC BAA-1301 / DSM 18059 / JW/NM-WN-LF) protein is Sec-independent protein translocase protein TatA.